A 325-amino-acid polypeptide reads, in one-letter code: Anthranilate phosphoribosyltransferase (325 aa).

Residues glycine 74, 77-78 (GD), threonine 82, 84-87 (NVST), 101-109 (KHGNVSITS), and serine 113 contribute to the 5-phospho-alpha-D-ribose 1-diphosphate site. Residue glycine 74 coordinates anthranilate. Residue serine 86 coordinates Mg(2+). Asparagine 104 lines the anthranilate pocket. Position 159 (arginine 159) interacts with anthranilate. Residues aspartate 217 and glutamate 218 each coordinate Mg(2+).

It belongs to the anthranilate phosphoribosyltransferase family. In terms of assembly, homodimer. Mg(2+) is required as a cofactor.

The enzyme catalyses N-(5-phospho-beta-D-ribosyl)anthranilate + diphosphate = 5-phospho-alpha-D-ribose 1-diphosphate + anthranilate. The protein operates within amino-acid biosynthesis; L-tryptophan biosynthesis; L-tryptophan from chorismate: step 2/5. Functionally, catalyzes the transfer of the phosphoribosyl group of 5-phosphorylribose-1-pyrophosphate (PRPP) to anthranilate to yield N-(5'-phosphoribosyl)-anthranilate (PRA). In Thermococcus kodakarensis (strain ATCC BAA-918 / JCM 12380 / KOD1) (Pyrococcus kodakaraensis (strain KOD1)), this protein is Anthranilate phosphoribosyltransferase.